A 635-amino-acid polypeptide reads, in one-letter code: DNA mismatch repair protein MutL (635 aa).

The segment at 352-380 (KAALQRGWVPPGAGRPGEGGGRAAPPPWR) is disordered.

It belongs to the DNA mismatch repair MutL/HexB family.

Its function is as follows. This protein is involved in the repair of mismatches in DNA. It is required for dam-dependent methyl-directed DNA mismatch repair. May act as a 'molecular matchmaker', a protein that promotes the formation of a stable complex between two or more DNA-binding proteins in an ATP-dependent manner without itself being part of a final effector complex. The polypeptide is DNA mismatch repair protein MutL (Symbiobacterium thermophilum (strain DSM 24528 / JCM 14929 / IAM 14863 / T)).